The chain runs to 208 residues: uncharacterized protein (208 aa).

A run of 6 helical transmembrane segments spans residues 5-25 (VIGILVIIAIISVGFFQKEAW), 41-61 (MLLIAADVFFPIVPFALIAAL), 69-89 (ANGIWITLTGSMLGTILLFFL), 123-143 (VLLGRLIPVIPSLVMNVICGL), 150-170 (VFFFASLIGKIPNIVVVTIAG), and 176-196 (NKLLSISIYGTYILIIMLVIY).

The protein localises to the cell membrane. This is an uncharacterized protein from Bacillus subtilis (strain 168).